Consider the following 283-residue polypeptide: Nudix hydrolase 6 (283 aa).

The region spanning 101-233 (SHRIGVGAFV…KKELFRFMAN (133 aa)) is the Nudix hydrolase domain. A Nudix box motif is present at residues 139–160 (GVVKEGENIWEGALREVEEETG). A divalent metal cation is bound by residues Glu154, Glu158, and Glu204.

It belongs to the Nudix hydrolase family. Mg(2+) serves as cofactor. It depends on Mn(2+) as a cofactor. As to expression, expressed in stems and leaves. Weakly or not expressed in roots.

It catalyses the reaction ADP-D-ribose + H2O = D-ribose 5-phosphate + AMP + 2 H(+). The catalysed reaction is NAD(+) + H2O = beta-nicotinamide D-ribonucleotide + AMP + 2 H(+). The enzyme catalyses NADH + H2O = reduced beta-nicotinamide D-ribonucleotide + AMP + 2 H(+). Its function is as follows. Probably mediates the hydrolysis of some nucleoside diphosphate derivatives. In vitro, it can use both NADH and ADP-ribose as substrates; however the relevance of such substrates in vivo is unclear. The protein is Nudix hydrolase 6 of Arabidopsis thaliana (Mouse-ear cress).